The sequence spans 616 residues: Probable beta-hexosaminidase ARB_01353 (616 aa).

A signal peptide spans 1-20; it reads MRFAKALAITAVLLSGVVEA. Positions 96 to 117 are disordered; sequence KFDPFPDQSSKPKEKRQNAPPG. Asparagine 333 carries N-linked (GlcNAc...) asparagine glycosylation. Glutamate 361 serves as the catalytic Proton donor.

Belongs to the glycosyl hydrolase 20 family.

The protein resides in the secreted. It carries out the reaction Hydrolysis of terminal non-reducing N-acetyl-D-hexosamine residues in N-acetyl-beta-D-hexosaminides.. Beta-hexosaminidase that shows a broad substrate specificity. This Arthroderma benhamiae (strain ATCC MYA-4681 / CBS 112371) (Trichophyton mentagrophytes) protein is Probable beta-hexosaminidase ARB_01353.